The following is a 382-amino-acid chain: Mannitol-1-phosphate 5-dehydrogenase (382 aa).

3–14 (ALHFGAGNIGRG) contacts NAD(+). At Lys-269 the chain carries N6-acetyllysine.

The protein belongs to the mannitol dehydrogenase family. Monomer.

The enzyme catalyses D-mannitol 1-phosphate + NAD(+) = beta-D-fructose 6-phosphate + NADH + H(+). This chain is Mannitol-1-phosphate 5-dehydrogenase, found in Escherichia coli O157:H7.